Reading from the N-terminus, the 325-residue chain is Chain length determinant protein (325 aa).

The Cytoplasmic portion of the chain corresponds to 1–31 (MRVENNNVSGQNHDPEQIDLIDLLVQLWRGK). Residues 32–52 (MTIIISVIVAIALAIGYLAVA) traverse the membrane as a helical segment. Topologically, residues 53-294 (KEKWTSTAII…LPIRRDSPKK (242 aa)) are periplasmic. A helical transmembrane segment spans residues 295–315 (AITLILAVLLGGMVGAGIVLG). At 316 to 325 (RNALRNYNAK) the chain is on the cytoplasmic side.

Belongs to the WzzB/Cld/Rol family.

It localises to the cell inner membrane. The protein operates within bacterial outer membrane biogenesis; lipopolysaccharide biosynthesis. Confers a modal distribution of chain length on the O-antigen component of lipopolysaccharide (LPS). Gives rise to a reduced number of short chain molecules and increases in numbers of longer molecules, with a modal value of 13 (in strain O111/M92) and of 17 (in strain K12). In Escherichia coli, this protein is Chain length determinant protein (wzzB).